The chain runs to 586 residues: A-type ATP synthase subunit A (586 aa).

232–239 contacts ATP; that stretch reads GPFGSGKT.

Belongs to the ATPase alpha/beta chains family. Has multiple subunits with at least A(3), B(3), C, D, E, F, H, I and proteolipid K(x).

The protein resides in the cell membrane. The enzyme catalyses ATP + H2O + 4 H(+)(in) = ADP + phosphate + 5 H(+)(out). Component of the A-type ATP synthase that produces ATP from ADP in the presence of a proton gradient across the membrane. The A chain is the catalytic subunit. The sequence is that of A-type ATP synthase subunit A from Methanococcus maripaludis (strain DSM 14266 / JCM 13030 / NBRC 101832 / S2 / LL).